A 307-amino-acid chain; its full sequence is Protoheme IX farnesyltransferase (307 aa).

The next 9 membrane-spanning stretches (helical) occupy residues 31–51 (VMSL…YSVH), 52–72 (PFIA…AGAI), 102–119 (ALSF…FMAL), 123–145 (LLAS…IWLK), 151–171 (NIVI…AAVS), 179–199 (VILF…LALF), 225–245 (ILIY…IGMS), 247–267 (FIYL…AGSL), and 281–301 (FVYS…TNTI).

Belongs to the UbiA prenyltransferase family. Protoheme IX farnesyltransferase subfamily.

The protein resides in the cell inner membrane. It carries out the reaction heme b + (2E,6E)-farnesyl diphosphate + H2O = Fe(II)-heme o + diphosphate. It functions in the pathway porphyrin-containing compound metabolism; heme O biosynthesis; heme O from protoheme: step 1/1. In terms of biological role, converts heme B (protoheme IX) to heme O by substitution of the vinyl group on carbon 2 of heme B porphyrin ring with a hydroxyethyl farnesyl side group. This chain is Protoheme IX farnesyltransferase, found in Rickettsia canadensis (strain McKiel).